We begin with the raw amino-acid sequence, 395 residues long: Alanine racemase 2 (395 aa).

Catalysis depends on Lys-60, which acts as the Proton acceptor; specific for D-alanine. Lys-60 is modified (N6-(pyridoxal phosphate)lysine). Arg-158 lines the substrate pocket. Tyr-288 (proton acceptor; specific for L-alanine) is an active-site residue. Met-332 contacts substrate.

The protein belongs to the alanine racemase family. Pyridoxal 5'-phosphate serves as cofactor.

It catalyses the reaction L-alanine = D-alanine. It functions in the pathway amino-acid biosynthesis; D-alanine biosynthesis; D-alanine from L-alanine: step 1/1. Functionally, catalyzes the interconversion of L-alanine and D-alanine. May also act on other amino acids. The protein is Alanine racemase 2 (alr2) of Clostridium acetobutylicum (strain ATCC 824 / DSM 792 / JCM 1419 / IAM 19013 / LMG 5710 / NBRC 13948 / NRRL B-527 / VKM B-1787 / 2291 / W).